Here is a 309-residue protein sequence, read N- to C-terminus: UDP-N-acetylenolpyruvoylglucosamine reductase (309 aa).

Positions 33–198 (RVGGPAQVLF…TSARFRGTPA (166 aa)) constitute an FAD-binding PCMH-type domain. The active site involves Arg178. Ser227 functions as the Proton donor in the catalytic mechanism. The active site involves Glu297.

It belongs to the MurB family. It depends on FAD as a cofactor.

The protein localises to the cytoplasm. The enzyme catalyses UDP-N-acetyl-alpha-D-muramate + NADP(+) = UDP-N-acetyl-3-O-(1-carboxyvinyl)-alpha-D-glucosamine + NADPH + H(+). It participates in cell wall biogenesis; peptidoglycan biosynthesis. Functionally, cell wall formation. The sequence is that of UDP-N-acetylenolpyruvoylglucosamine reductase from Rhodopseudomonas palustris (strain HaA2).